A 373-amino-acid polypeptide reads, in one-letter code: Transaldolase (373 aa).

Lys-143 acts as the Schiff-base intermediate with substrate in catalysis.

This sequence belongs to the transaldolase family. Type 2 subfamily.

The protein resides in the cytoplasm. The enzyme catalyses D-sedoheptulose 7-phosphate + D-glyceraldehyde 3-phosphate = D-erythrose 4-phosphate + beta-D-fructose 6-phosphate. It participates in carbohydrate degradation; pentose phosphate pathway; D-glyceraldehyde 3-phosphate and beta-D-fructose 6-phosphate from D-ribose 5-phosphate and D-xylulose 5-phosphate (non-oxidative stage): step 2/3. In terms of biological role, transaldolase is important for the balance of metabolites in the pentose-phosphate pathway. The polypeptide is Transaldolase (Mycobacterium marinum (strain ATCC BAA-535 / M)).